The chain runs to 568 residues: Proton-coupled zinc antiporter SLC30A9, mitochondrial (568 aa).

A mitochondrion-targeting transit peptide spans 1 to 67 (MLPGLAAAAA…IGTLSQVKLY (67 aa)). A run of 5 helical transmembrane segments spans residues 239 to 259 (VVMV…LAWI), 314 to 334 (GVGI…MGLL), 342 to 362 (LLWA…TLLV), 392 to 412 (VILL…TCMG), and 424 to 444 (SLGS…LIYT). The LXXLL motif signature appears at 462–466 (LTELL).

It belongs to the cation diffusion facilitator (CDF) transporter (TC 2.A.4) family. SLC30A subfamily. Interacts with GRIP1, ESR1 and AR. As to expression, ubiquitously expressed in fetal and adult tissues and cancer cell lines.

It is found in the mitochondrion membrane. It localises to the nucleus. The protein localises to the endoplasmic reticulum. The catalysed reaction is Zn(2+)(in) + 2 H(+)(out) = Zn(2+)(out) + 2 H(+)(in). Mitochondrial proton-coupled zinc ion antiporter mediating the export of zinc from the mitochondria and involved in zinc homeostasis, zinc mobilization as well as mitochondrial morphology and health. In nucleus, functions as a secondary coactivator for nuclear receptors by cooperating with p160 coactivators subtypes. Plays a role in transcriptional activation of Wnt-responsive genes. The chain is Proton-coupled zinc antiporter SLC30A9, mitochondrial from Homo sapiens (Human).